A 213-amino-acid polypeptide reads, in one-letter code: Orotate phosphoribosyltransferase (213 aa).

Lysine 26 is a 5-phospho-alpha-D-ribose 1-diphosphate binding site. Position 34-35 (34-35 (FF)) interacts with orotate. 5-phospho-alpha-D-ribose 1-diphosphate is bound by residues 72-73 (YK), arginine 99, lysine 100, lysine 103, histidine 105, and 124-132 (DDVITAGTA). Threonine 128 and arginine 156 together coordinate orotate.

Belongs to the purine/pyrimidine phosphoribosyltransferase family. PyrE subfamily. As to quaternary structure, homodimer. Mg(2+) is required as a cofactor.

It catalyses the reaction orotidine 5'-phosphate + diphosphate = orotate + 5-phospho-alpha-D-ribose 1-diphosphate. It functions in the pathway pyrimidine metabolism; UMP biosynthesis via de novo pathway; UMP from orotate: step 1/2. Catalyzes the transfer of a ribosyl phosphate group from 5-phosphoribose 1-diphosphate to orotate, leading to the formation of orotidine monophosphate (OMP). This Shigella flexneri protein is Orotate phosphoribosyltransferase.